The primary structure comprises 534 residues: Protein tweety homolog 2 (534 aa).

The Extracellular portion of the chain corresponds to 1–44; sequence MQAARVDYIAPWWVVWLHSVPHVGLRLQPVNSTFSPGDESYQES. The N-linked (GlcNAc...) asparagine glycan is linked to Asn-31. The chain crosses the membrane as a helical span at residues 45 to 65; it reads LLFLGLVAAVCLGLNLIFLVA. At 66–87 the chain is on the cytoplasmic side; the sequence is YLVCACHCRRDDAVQTKQHHSC. The helical transmembrane segment at 88–108 threads the bilayer; that stretch reads CITWTAVVAGLICCAAVGVGF. Residues 109-213 lie on the Extracellular side of the membrane; sequence YGNSETNDGA…QTGYVEYYRW (105 aa). Positions 113 and 116 each coordinate Ca(2+). Asn-129 carries N-linked (GlcNAc) asparagine glycosylation. The short motif at 164-166 is the RGD element; the sequence is RGD. At Thr-199 the chain carries Phosphothreonine. Residues 214-234 form a helical membrane-spanning segment; it reads LSYLLLFILDLVICLIACLGL. Over 235–240 the chain is Cytoplasmic; that stretch reads AKRSKC. Residues 241–261 form a helical membrane-spanning segment; it reads LLASMLCCGALSLLLSWASLA. At 262–388 the chain is on the extracellular side; it reads ADGSAAVATS…AGICYDGLQG (127 aa). Intrachain disulfides connect Cys-274-Cys-382 and Cys-300-Cys-367. An N-linked (GlcNAc...) asparagine glycan is attached at Asn-283. Asn-352 carries an N-linked (GlcNAc) asparagine glycan. Residues 389–409 traverse the membrane as a helical segment; the sequence is LLYLGLFSFLAALAFSTMICA. Over 410-534 the chain is Cytoplasmic; it reads GPRAWKHFTT…LRHYGNQFPA (125 aa). Ser-504 is modified (phosphoserine). The short motif at 506–509 is the PY-motif; mediates interaction with NEDD4L element; that stretch reads PPTY.

This sequence belongs to the tweety family. In terms of assembly, homodimer. Forms cis-homodimers in the presence of Ca(+2) and forms monomers and trans-dimers in the absence of Ca(2+). Interacts with NEDD4L. N- Glycosylated. Contains high-mannose, hybrid and complex oligosaccharides. In terms of processing, ubiquitinated by NEDD4L, leading to its proteasomal degradation. Expressed at higher level in brain and testis and at lower levels in heart, ovary, spleen and peripheral blood leukocytes. Up-regulated in 13 of 16 renal cell carcinoma samples examined. Up-regulated in colon carcinoma.

The protein resides in the cell membrane. It catalyses the reaction chloride(in) = chloride(out). The enzyme catalyses L-glutamate(out) = L-glutamate(in). Functionally, calcium-independent, swelling-dependent volume-regulated anion channel (VRAC-swell) which plays a pivotal role in the process of regulatory volume decrease (RVD) in the brain through the efflux of anions like chloride and organic osmolytes like glutamate. Probable large-conductance Ca(2+)-activated chloride channel. The sequence is that of Protein tweety homolog 2 (TTYH2) from Homo sapiens (Human).